Consider the following 98-residue polypeptide: Biogenesis of lysosome-related organelles complex 1 subunit SNN1 (98 aa).

The stretch at 55-98 forms a coiled coil; the sequence is MDEQELLQEEGSLKEELARVNQLKKRLDKLTELYAELARKCGAL.

It belongs to the SNAPIN family. As to quaternary structure, component of the biogenesis of lysosome-related organelles complex-1 (BLOC-1).

It localises to the endosome. Component of the biogenesis of lysosome-related organelles complex-1 (BLOC-1), a complex involved in endosomal cargo sorting. The polypeptide is Biogenesis of lysosome-related organelles complex 1 subunit SNN1 (SNN1) (Eremothecium gossypii (strain ATCC 10895 / CBS 109.51 / FGSC 9923 / NRRL Y-1056) (Yeast)).